Reading from the N-terminus, the 189-residue chain is UPF0301 protein Plut_0637 (189 aa).

This sequence belongs to the UPF0301 (AlgH) family.

This Chlorobium luteolum (strain DSM 273 / BCRC 81028 / 2530) (Pelodictyon luteolum) protein is UPF0301 protein Plut_0637.